A 373-amino-acid polypeptide reads, in one-letter code: Probable pectin lyase C (373 aa).

Residues 1–18 (MKVPFLQLLCLNAALASA) form the signal peptide. Disulfide bonds link cysteine 81–cysteine 100 and cysteine 90–cysteine 220. An N-linked (GlcNAc...) asparagine glycan is attached at asparagine 123. Arginine 250 is a catalytic residue. Residues cysteine 316 and cysteine 324 are joined by a disulfide bond.

Belongs to the polysaccharide lyase 1 family.

The protein resides in the secreted. The enzyme catalyses Eliminative cleavage of (1-&gt;4)-alpha-D-galacturonan methyl ester to give oligosaccharides with 4-deoxy-6-O-methyl-alpha-D-galact-4-enuronosyl groups at their non-reducing ends.. Functionally, pectinolytic enzymes consist of four classes of enzymes: pectin lyase, polygalacturonase, pectin methylesterase and rhamnogalacturonase. Among pectinolytic enzymes, pectin lyase is the most important in depolymerization of pectin, since it cleaves internal glycosidic bonds of highly methylated pectins. This chain is Probable pectin lyase C (pelC), found in Aspergillus niger (strain ATCC MYA-4892 / CBS 513.88 / FGSC A1513).